The sequence spans 208 residues: Large ribosomal subunit protein uL4 (208 aa).

The interval 42-77 is disordered; sequence SMRQGTHKTKTKTEVSGGGRKPWRQKGTGRARQGSI.

This sequence belongs to the universal ribosomal protein uL4 family. In terms of assembly, part of the 50S ribosomal subunit.

One of the primary rRNA binding proteins, this protein initially binds near the 5'-end of the 23S rRNA. It is important during the early stages of 50S assembly. It makes multiple contacts with different domains of the 23S rRNA in the assembled 50S subunit and ribosome. Its function is as follows. Forms part of the polypeptide exit tunnel. The polypeptide is Large ribosomal subunit protein uL4 (Spiroplasma kunkelii).